We begin with the raw amino-acid sequence, 256 residues long: ATG8-interacting protein 1 (256 aa).

The AIM (Atg8-family-interacting motif) motif lies at 14 to 17; the sequence is WEVV. Residues 181–200 traverse the membrane as a helical segment; sequence ANAIWSLFFAAAVTGLVVLG. The AIM (Atg8-family-interacting motif) motif lies at 208-211; sequence WQVL.

Interacts with ATG8F. Interacts with ATG8H. Interacts with APE1 and PSBS/NPQ4.

It localises to the endoplasmic reticulum membrane. Its subcellular location is the membrane. It is found in the plastid. The protein resides in the chloroplast membrane. Its function is as follows. Involved in a special stress-induced plastid-to-vacuole protein trafficking pathway. Interacts with ATG8F in plastid bodies to subsequently enable their delivery to the vacuole by an autophagic pathway. Interacts with the plastid proteins APE1 and PSBS/NPQ4 and may recruit them as cargo into plastid bodies that may be recognized by the autophagy machinery for degradation in the vacuole. Involved in the alleviation of damage caused by salt stress during plant development, probably through its involvement in plastid-to-vacuole and ER-to-vacuole trafficking. Plays a role in seed germination in response to exogenous abscisic acid (ABA) treatment. The polypeptide is ATG8-interacting protein 1 (Arabidopsis thaliana (Mouse-ear cress)).